A 602-amino-acid chain; its full sequence is GTP-binding protein 2 (602 aa).

The tract at residues 16–64 (GGGPAVGGTLKARGAGSSSGCGGPKGKKKNGRNRGGKANNPPYLPPEAE) is disordered. Residues 40-50 (KGKKKNGRNRG) show a composition bias toward basic residues. The tr-type G domain maps to 170–398 (FLDLRVAVLG…LNILPPLTNS (229 aa)). GTP contacts are provided by residues 179-186 (GNVDSGKS), 260-264 (DLAGH), and 316-319 (SKID).

It belongs to the TRAFAC class translation factor GTPase superfamily. Classic translation factor GTPase family. GTPBP1 subfamily. In terms of tissue distribution, predominantly expressed in thymus, spleen, and testis. Expressed at lower levels in brain, lung, kidney, and ovary.

In Homo sapiens (Human), this protein is GTP-binding protein 2.